A 533-amino-acid polypeptide reads, in one-letter code: Bifunctional purine biosynthesis protein PurH (533 aa).

The MGS-like domain occupies 1-148 (MDTPRPIKRA…KNHKDVTIVV (148 aa)).

The protein belongs to the PurH family.

It carries out the reaction (6R)-10-formyltetrahydrofolate + 5-amino-1-(5-phospho-beta-D-ribosyl)imidazole-4-carboxamide = 5-formamido-1-(5-phospho-D-ribosyl)imidazole-4-carboxamide + (6S)-5,6,7,8-tetrahydrofolate. It catalyses the reaction IMP + H2O = 5-formamido-1-(5-phospho-D-ribosyl)imidazole-4-carboxamide. It participates in purine metabolism; IMP biosynthesis via de novo pathway; 5-formamido-1-(5-phospho-D-ribosyl)imidazole-4-carboxamide from 5-amino-1-(5-phospho-D-ribosyl)imidazole-4-carboxamide (10-formyl THF route): step 1/1. The protein operates within purine metabolism; IMP biosynthesis via de novo pathway; IMP from 5-formamido-1-(5-phospho-D-ribosyl)imidazole-4-carboxamide: step 1/1. The polypeptide is Bifunctional purine biosynthesis protein PurH (Colwellia psychrerythraea (strain 34H / ATCC BAA-681) (Vibrio psychroerythus)).